Reading from the N-terminus, the 455-residue chain is Inactive peptidyl-prolyl cis-trans isomerase shutdown (455 aa).

The interval 34–54 is disordered; the sequence is SQQNHARDLGLDSDSDSDYED. Residues 44–54 are compositionally biased toward acidic residues; it reads LDSDSDSDYED. Residues 103 to 192 form the PPIase FKBP-type domain; that stretch reads KARVSVRYSG…LFKVEVIDYS (90 aa). TPR repeat units lie at residues 218 to 251 and 303 to 336; these read AVDL…LNYC and CKAL…QPAN.

Belongs to the FKBP6 family. As to quaternary structure, interacts with Hsp83. As to expression, strongly expressed in the germline stem cells and in 16-cell cysts. Present in the germ cells throughout embryogenesis. Defects are due to derepression of transposable elements and impaired piRNA biogenesis.

The protein localises to the cytoplasm. It localises to the cytoplasmic ribonucleoprotein granule. Its function is as follows. Co-chaperone required during oogenesis to repress transposable elements and prevent their mobilization, which is essential for the germline integrity. Acts via the piRNA metabolic process, which mediates the repression of transposable elements during meiosis by forming complexes composed of piRNAs and Piwi proteins and govern the methylation and subsequent repression of transposons. Acts as a co-chaperone via its interaction with Hsp83/HSP90 and is required for the biogenesis of all three piRNA major populations. The polypeptide is Inactive peptidyl-prolyl cis-trans isomerase shutdown (Drosophila melanogaster (Fruit fly)).